A 326-amino-acid polypeptide reads, in one-letter code: MMTAEVTAADAEVLLAQPRGFCAGVDRAIDIVERALELHGAPIYVRHEIVHNRYVVEDLRGKGAVFIDELDQAPAGAIVVFSAHGVSQAVRGEAEARGLRVFDATCPLVTKVHIEVARMRAAGREIVMIGHKGHPEVEGTLGQAQGGMYLVETVEDVAALQVSDPGNLAYVTQTTLSVDDAAAVAGALKARFPGIVEPKKSDICYATQNRQDAVKLLAPECDLVLVVGSTNSSNSNRLREVAERKGVAAYLIDGAHAIDPAWLQGRRSIGITAGASAPEVLVQQVVERVRELGAVSVRTMPGLEESVAFPLPKGLSRKIAQTESLE.

C22 is a binding site for [4Fe-4S] cluster. Positions 51 and 84 each coordinate (2E)-4-hydroxy-3-methylbut-2-enyl diphosphate. The dimethylallyl diphosphate site is built by H51 and H84. 2 residues coordinate isopentenyl diphosphate: H51 and H84. C106 contributes to the [4Fe-4S] cluster binding site. (2E)-4-hydroxy-3-methylbut-2-enyl diphosphate is bound at residue H134. A dimethylallyl diphosphate-binding site is contributed by H134. Isopentenyl diphosphate is bound at residue H134. E136 serves as the catalytic Proton donor. T174 serves as a coordination point for (2E)-4-hydroxy-3-methylbut-2-enyl diphosphate. Residue C204 participates in [4Fe-4S] cluster binding. S232, S233, N234, and S276 together coordinate (2E)-4-hydroxy-3-methylbut-2-enyl diphosphate. S232, S233, N234, and S276 together coordinate dimethylallyl diphosphate. The isopentenyl diphosphate site is built by S232, S233, N234, and S276.

Belongs to the IspH family. Requires [4Fe-4S] cluster as cofactor.

It carries out the reaction isopentenyl diphosphate + 2 oxidized [2Fe-2S]-[ferredoxin] + H2O = (2E)-4-hydroxy-3-methylbut-2-enyl diphosphate + 2 reduced [2Fe-2S]-[ferredoxin] + 2 H(+). It catalyses the reaction dimethylallyl diphosphate + 2 oxidized [2Fe-2S]-[ferredoxin] + H2O = (2E)-4-hydroxy-3-methylbut-2-enyl diphosphate + 2 reduced [2Fe-2S]-[ferredoxin] + 2 H(+). It functions in the pathway isoprenoid biosynthesis; dimethylallyl diphosphate biosynthesis; dimethylallyl diphosphate from (2E)-4-hydroxy-3-methylbutenyl diphosphate: step 1/1. The protein operates within isoprenoid biosynthesis; isopentenyl diphosphate biosynthesis via DXP pathway; isopentenyl diphosphate from 1-deoxy-D-xylulose 5-phosphate: step 6/6. In terms of biological role, catalyzes the conversion of 1-hydroxy-2-methyl-2-(E)-butenyl 4-diphosphate (HMBPP) into a mixture of isopentenyl diphosphate (IPP) and dimethylallyl diphosphate (DMAPP). Acts in the terminal step of the DOXP/MEP pathway for isoprenoid precursor biosynthesis. This is 4-hydroxy-3-methylbut-2-enyl diphosphate reductase from Bordetella parapertussis (strain 12822 / ATCC BAA-587 / NCTC 13253).